The chain runs to 102 residues: RxLR effector protein PexRD41 (102 aa).

Positions 1-21 (MRSIFYFALAFAALTCSNASA) are cleaved as a signal peptide. Residues 39-53 (RSLRVAGQEAARGEE) carry the RxLR-dEER motif.

This sequence belongs to the RxLR effector family. As to quaternary structure, interacts with host KRBP1.

Its subcellular location is the secreted. It is found in the host cytoplasm. It localises to the host nucleus. The protein localises to the host nucleolus. Its function is as follows. Effector that enhances P.infestans colonization of host plant leaves. During the early stages of P.infestans infection, interacts with and stabilizes host potato K-homology (KH) RNA-binding protein KRBP1, leading to its accumulation. In Phytophthora infestans (strain T30-4) (Potato late blight agent), this protein is RxLR effector protein PexRD41.